Reading from the N-terminus, the 298-residue chain is N-acetylmuramic acid 6-phosphate etherase (298 aa).

In terms of domain architecture, SIS spans 55–218 (AANRYKKGGR…STGVMIRQGK (164 aa)). Glu-83 functions as the Proton donor in the catalytic mechanism. Residue Glu-114 is part of the active site.

It belongs to the GCKR-like family. MurNAc-6-P etherase subfamily. In terms of assembly, homodimer.

The enzyme catalyses N-acetyl-D-muramate 6-phosphate + H2O = N-acetyl-D-glucosamine 6-phosphate + (R)-lactate. It participates in amino-sugar metabolism; N-acetylmuramate degradation. Functionally, specifically catalyzes the cleavage of the D-lactyl ether substituent of MurNAc 6-phosphate, producing GlcNAc 6-phosphate and D-lactate. This is N-acetylmuramic acid 6-phosphate etherase from Lactobacillus acidophilus (strain ATCC 700396 / NCK56 / N2 / NCFM).